A 325-amino-acid polypeptide reads, in one-letter code: Tagatose 1,6-diphosphate aldolase 1 (325 aa).

It belongs to the aldolase LacD family.

It carries out the reaction D-tagatofuranose 1,6-bisphosphate = D-glyceraldehyde 3-phosphate + dihydroxyacetone phosphate. Its pathway is carbohydrate metabolism; D-tagatose 6-phosphate degradation; D-glyceraldehyde 3-phosphate and glycerone phosphate from D-tagatose 6-phosphate: step 2/2. The sequence is that of Tagatose 1,6-diphosphate aldolase 1 (lacD1) from Streptococcus pyogenes serotype M3 (strain SSI-1).